The primary structure comprises 316 residues: uncharacterized protein (316 aa).

The protein belongs to the asfivirus F317L family.

It localises to the virion. This is an uncharacterized protein from Ornithodoros (relapsing fever ticks).